The following is a 389-amino-acid chain: Inactive serine/threonine-protein kinase ZRK12 (389 aa).

One can recognise a Protein kinase domain in the interval 41 to 342 (SADEIRKATN…ETQFDSHQDI (302 aa)). Residues 47–55 (KATNNFGVS) and Lys84 each bind ATP. Phosphotyrosine is present on Tyr129. Thr214 bears the Phosphothreonine mark. Tyr222 bears the Phosphotyrosine mark.

The protein belongs to the protein kinase superfamily. Ser/Thr protein kinase family.

Together with RPP13L4/ZAR1, involved in the regulation of the ambient temperature-sensitive intersection of growth and immune response in the absence of pathogens. The chain is Inactive serine/threonine-protein kinase ZRK12 from Arabidopsis thaliana (Mouse-ear cress).